The primary structure comprises 237 residues: MNARQKPAPVITIDGPSGSGKGTIAFRIAQTLNWYLLDSGIIYRAIAWAMAHYKVPLEDSAGLARLLKRVQISIENRILGKKAKISCDGHDITLAIRSEECGALASRASALPIVREAVLQYQRDFRQRPGLVADGRDMGTVVFPDAVLKFYFDADSQQRAYRRYKELQDRGINVSLPDIQEDLEERDRRDITRSISPTKPAEDAVIIDTTHLSIEAVFATVMNHVRQRGLANVANEK.

15–23 (GPSGSGKGT) contributes to the ATP binding site.

This sequence belongs to the cytidylate kinase family. Type 1 subfamily.

The protein resides in the cytoplasm. The enzyme catalyses CMP + ATP = CDP + ADP. It carries out the reaction dCMP + ATP = dCDP + ADP. This Coxiella burnetii (strain RSA 493 / Nine Mile phase I) protein is Cytidylate kinase.